The chain runs to 450 residues: Signal recognition particle 54 kDa protein (450 aa).

GTP-binding positions include 107-114 (GIQGSGKT), 188-192 (DTAGR), and 247-250 (TKLD).

It belongs to the GTP-binding SRP family. SRP54 subfamily. In terms of assembly, part of the signal recognition particle protein translocation system, which is composed of SRP and FtsY. Archaeal SRP consists of a 7S RNA molecule of 300 nucleotides and two protein subunits: SRP54 and SRP19.

It is found in the cytoplasm. The enzyme catalyses GTP + H2O = GDP + phosphate + H(+). In terms of biological role, involved in targeting and insertion of nascent membrane proteins into the cytoplasmic membrane. Binds to the hydrophobic signal sequence of the ribosome-nascent chain (RNC) as it emerges from the ribosomes. The SRP-RNC complex is then targeted to the cytoplasmic membrane where it interacts with the SRP receptor FtsY. This chain is Signal recognition particle 54 kDa protein, found in Methanococcus vannielii (strain ATCC 35089 / DSM 1224 / JCM 13029 / OCM 148 / SB).